We begin with the raw amino-acid sequence, 709 residues long: Transcriptional factor SWI5 (709 aa).

Ser225 is subject to Phosphoserine. The segment covering 245 to 264 (LSPMISPPMSNTSFTGSPSR) has biased composition (polar residues). Residues 245–267 (LSPMISPPMSNTSFTGSPSRRNN) are disordered. Phosphoserine occurs at positions 278 and 300. Thr339 carries the post-translational modification Phosphothreonine. A Phosphoserine modification is found at Ser376. The segment at 443 to 483 (LKPPSQQARHREGVFNDLDPNVLTKNTDNEGDDNEENEPES) is disordered. Residues 471–480 (NEGDDNEENE) show a composition bias toward acidic residues. Phosphoserine is present on residues Ser488, Ser492, and Ser505. Ser522 bears the Phosphoserine; by CDC28 mark. 3 C2H2-type zinc fingers span residues 550-574 (FECLFPGCTKTFKRRYNIRSHIQTH), 580-604 (YSCDHPGCDKAFVRNHDLIRHKKSH), and 609-632 (YACPCGKKFNREDALVVHRSRMIC). The short motif at 635–659 (GKKYENVVIKRSPRKRGRPRKDGTS) is the Nuclear localization signal element. The interval 644–677 (KRSPRKRGRPRKDGTSSVSSSPIKENINKDHNGQ) is disordered. Ser646 carries the phosphoserine; by CDC28 modification. The a.T hook DNA-binding region spans 647-659 (PRKRGRPRKDGTS). Phosphoserine; by CDC28 is present on Ser664.

Post-translationally, cell cycle-dependent phosphorylation of three serine residues prevents SWI5 from entering the nucleus, and it accumulates in the cytoplasm. As a consequence of CDC28 kinase inactivation at the end of anaphase, the three serine residues are dephosphorylated and SWI5 enters the nucleus to activate transcription. It is then rapidly degraded. Threonine phosphorylation also seems to occur. Phosphorylated by PHO85.

The protein resides in the nucleus. It localises to the cytoplasm. Its function is as follows. Determines the mother-cell-specific transcription of the HO endonuclease gene that is responsible for the initiation of mating-type switching in yeast. Recognizes a specific sequence in the promoter of the HO gene. Activates EGT2 transcription in a concentration-dependent manner. Synthesized during G2 and early mitosis. This chain is Transcriptional factor SWI5 (SWI5), found in Saccharomyces cerevisiae (strain ATCC 204508 / S288c) (Baker's yeast).